We begin with the raw amino-acid sequence, 284 residues long: Tryptophan synthase alpha chain (284 aa).

Residues Glu55 and Asp66 each act as proton acceptor in the active site.

This sequence belongs to the TrpA family. Tetramer of two alpha and two beta chains.

It catalyses the reaction (1S,2R)-1-C-(indol-3-yl)glycerol 3-phosphate + L-serine = D-glyceraldehyde 3-phosphate + L-tryptophan + H2O. It functions in the pathway amino-acid biosynthesis; L-tryptophan biosynthesis; L-tryptophan from chorismate: step 5/5. In terms of biological role, the alpha subunit is responsible for the aldol cleavage of indoleglycerol phosphate to indole and glyceraldehyde 3-phosphate. This chain is Tryptophan synthase alpha chain, found in Methanococcus voltae.